The following is a 259-amino-acid chain: Major cell-binding factor (259 aa).

The first 26 residues, 1-26 (MVFRKSLLKLAVFALGACVAFSNANA), serve as a signal peptide directing secretion.

It belongs to the bacterial solute-binding protein 3 family.

It localises to the cell surface. Its function is as follows. Common antigen and a major cell adherence molecule. Most probably involved, with PEB1C, in a binding-protein-dependent transport system for an amino acid. May be involved in binding to intestinal cells. The protein is Major cell-binding factor (peb1A) of Campylobacter jejuni subsp. jejuni serotype O:23/36 (strain 81-176).